Consider the following 168-residue polypeptide: Tyrosine-protein phosphatase (168 aa).

Positions 24-168 (FKTPLRPELF…RQNYVQDLLI (145 aa)) constitute a Tyrosine-protein phosphatase domain. Cysteine 119 serves as the catalytic Phosphocysteine intermediate.

This sequence belongs to the protein-tyrosine phosphatase family. Non-receptor class CDC14 subfamily.

The enzyme catalyses O-phospho-L-tyrosyl-[protein] + H2O = L-tyrosyl-[protein] + phosphate. Its function is as follows. Plays a role in the regulation and processing of late viral mRNAs by displaying RNA 5'-triphosphatase and diphosphatase activities. This Autographa californica nuclear polyhedrosis virus (AcMNPV) protein is Tyrosine-protein phosphatase (PTP).